A 497-amino-acid polypeptide reads, in one-letter code: Probable malate:quinone oxidoreductase (497 aa).

Belongs to the MQO family. FAD serves as cofactor.

It catalyses the reaction (S)-malate + a quinone = a quinol + oxaloacetate. It functions in the pathway carbohydrate metabolism; tricarboxylic acid cycle; oxaloacetate from (S)-malate (quinone route): step 1/1. In Flavobacterium johnsoniae (strain ATCC 17061 / DSM 2064 / JCM 8514 / BCRC 14874 / CCUG 350202 / NBRC 14942 / NCIMB 11054 / UW101) (Cytophaga johnsonae), this protein is Probable malate:quinone oxidoreductase.